The following is a 165-amino-acid chain: Short form salivary protein D7R1 (165 aa).

An N-terminal signal peptide occupies residues 1-21 (MFNKLHLVSLLACGLFVIAQA). Intrachain disulfides connect C27-C59, C40-C164, and C98-C117. E28, H56, Y115, D132, and E135 together coordinate serotonin. Positions 115, 132, and 135 each coordinate histamine.

The protein belongs to the PBP/GOBP family. As to expression, female salivary gland. Not detected in female carcass without salivary glands. Not detected in male tissues.

It localises to the secreted. Modulates blood feeding of female mosquitoes on vertebrate species by binding and sequestering different mediators involved in the host response. Binds serotonin and histamine. Increases blood clotting time. In Anopheles gambiae (African malaria mosquito), this protein is Short form salivary protein D7R1.